The primary structure comprises 511 residues: Ribose import ATP-binding protein RbsA (511 aa).

2 ABC transporter domains span residues 7-242 (LQIS…VGRE) and 256-500 (CSTT…SGTQ). An ATP-binding site is contributed by 39-46 (GENGAGKS).

Belongs to the ABC transporter superfamily. Ribose importer (TC 3.A.1.2.1) family. As to quaternary structure, the complex is composed of an ATP-binding protein (RbsA), two transmembrane proteins (RbsC) and a solute-binding protein (RbsB).

The protein resides in the cell inner membrane. The enzyme catalyses D-ribose(out) + ATP + H2O = D-ribose(in) + ADP + phosphate + H(+). Its function is as follows. Part of the ABC transporter complex RbsABC involved in ribose import. Responsible for energy coupling to the transport system. This chain is Ribose import ATP-binding protein RbsA, found in Ruegeria sp. (strain TM1040) (Silicibacter sp.).